We begin with the raw amino-acid sequence, 341 residues long: HTH-type transcriptional repressor PurR (341 aa).

One can recognise an HTH lacI-type domain in the interval 2-56; that stretch reads ATIKDVAKRAGVSTTTVSHVINKTRFVADETKAAVWEAIKELHYSPSAVARSLKV. The segment at residues 4–23 is a DNA-binding region (H-T-H motif); that stretch reads IKDVAKRAGVSTTTVSHVIN. The DNA-binding element occupies 48–56; the sequence is SAVARSLKV. 5 residues coordinate hypoxanthine: Tyr73, Arg190, Thr192, Phe221, and Asp275.

In terms of assembly, homodimer.

It participates in purine metabolism; purine nucleotide biosynthesis [regulation]. Is the main repressor of the genes involved in the de novo synthesis of purine nucleotides, regulating purB, purC, purEK, purF, purHD, purL, purMN and guaBA expression. PurR is allosterically activated to bind its cognate DNA by binding the purine corepressors, hypoxanthine or guanine, thereby effecting transcription repression. In Edwardsiella ictaluri (strain 93-146), this protein is HTH-type transcriptional repressor PurR.